Here is a 602-residue protein sequence, read N- to C-terminus: MDSLQDTVALDHGGCCPALSRLVPRGFGTEMWTLFALSGPLFLFQVLTFMIYIVSTVFCGHLGKVELASVTLAVAFVNVCGVSVGVGLSSACDTLMSQSFGSPNKKHVGVILQRGALVLLLCCLPCWALFLNTQHILLLFRQDPDVSRLTQDYVMIFIPGLPVIFLYNLLAKYLQNQGWLKGQEEESPFQTPGLSILHPSHSHLSRASFHLFQKITWPQVLSGVVGNCVNGVANYALVSVLNLGVRGSAYANIISQFAQTVFLLLYIVLKKLHLETWAGWSSQCLQDWGPFFSLAVPSMLMICVEWWAYEIGSFLMGLLSVVDLSAQAVIYEVATVTYMIPLGLSIGVCVRVGMALGAADTVQAKRSAVSGVLSIVGISLVLGTLISILKNQLGHIFTNDEDVIALVSQVLPVYSVFHVFEAICCVYGGVLRGTGKQAFGAAVNAITYYIIGLPLGILLTFVVRMRIMGLWLGMLACVFLATAAFVAYTARLDWKLAAEEAKKHSGRQQQQRAESTATRPGPEKAVLSSVATGSSPGITLTTYSRSECHVDFFRTPEEAHALSAPTSRLSVKQLVIRRGAALGAASATLMVGLTVRILATRH.

The Cytoplasmic portion of the chain corresponds to 1–33 (MDSLQDTVALDHGGCCPALSRLVPRGFGTEMWT). A helical membrane pass occupies residues 34 to 54 (LFALSGPLFLFQVLTFMIYIV). Topologically, residues 55-66 (STVFCGHLGKVE) are extracellular. A helical membrane pass occupies residues 67–87 (LASVTLAVAFVNVCGVSVGVG). The Cytoplasmic segment spans residues 88–119 (LSSACDTLMSQSFGSPNKKHVGVILQRGALVL). Residues 120–140 (LLCCLPCWALFLNTQHILLLF) form a helical membrane-spanning segment. The Extracellular portion of the chain corresponds to 141 to 153 (RQDPDVSRLTQDY). Residues 154 to 174 (VMIFIPGLPVIFLYNLLAKYL) traverse the membrane as a helical segment. Residues 175 to 219 (QNQGWLKGQEEESPFQTPGLSILHPSHSHLSRASFHLFQKITWPQ) are Cytoplasmic-facing. The chain crosses the membrane as a helical span at residues 220 to 240 (VLSGVVGNCVNGVANYALVSV). The Extracellular segment spans residues 241–248 (LNLGVRGS). A helical membrane pass occupies residues 249–269 (AYANIISQFAQTVFLLLYIVL). The Cytoplasmic segment spans residues 270 to 289 (KKLHLETWAGWSSQCLQDWG). Residues 290-309 (PFFSLAVPSMLMICVEWWAY) traverse the membrane as a helical segment. Residues 310–327 (EIGSFLMGLLSVVDLSAQ) are Extracellular-facing. A helical transmembrane segment spans residues 328 to 348 (AVIYEVATVTYMIPLGLSIGV). Residues 349 to 368 (CVRVGMALGAADTVQAKRSA) lie on the Cytoplasmic side of the membrane. Residues 369 to 389 (VSGVLSIVGISLVLGTLISIL) traverse the membrane as a helical segment. The Extracellular segment spans residues 390 to 402 (KNQLGHIFTNDED). A helical transmembrane segment spans residues 403–423 (VIALVSQVLPVYSVFHVFEAI). At 424-442 (CCVYGGVLRGTGKQAFGAA) the chain is on the cytoplasmic side. Residues 443-463 (VNAITYYIIGLPLGILLTFVV) traverse the membrane as a helical segment. Over 464–466 (RMR) the chain is Extracellular. Residues 467–487 (IMGLWLGMLACVFLATAAFVA) traverse the membrane as a helical segment. Topologically, residues 488–578 (YTARLDWKLA…LSVKQLVIRR (91 aa)) are cytoplasmic. The segment at 503-529 (KHSGRQQQQRAESTATRPGPEKAVLSS) is disordered. Over residues 507-518 (RQQQQRAESTAT) the composition is skewed to polar residues. A helical membrane pass occupies residues 579–599 (GAALGAASATLMVGLTVRILA). The Extracellular segment spans residues 600–602 (TRH).

This sequence belongs to the multi antimicrobial extrusion (MATE) (TC 2.A.66.1) family. High expression in kidney. Very small expression in adrenal gland and lung. As to expression, high expression in kidney. Very small expression in brain and testis. In terms of tissue distribution, ubiquitously expressed in all tissues examined except the kidney.

The protein resides in the cell membrane. It localises to the apical cell membrane. It catalyses the reaction thiamine(out) + H(+)(in) = thiamine(in) + H(+)(out). The enzyme catalyses estrone 3-sulfate(in) + H(+)(out) = estrone 3-sulfate(out) + H(+)(in). The catalysed reaction is creatinine(in) + H(+)(out) = creatinine(out) + H(+)(in). Its function is as follows. Multidrug efflux pump that functions as a H(+)/organic cation antiporter. Mediates the efflux of cationic compounds, such as the model cations, tetraethylammonium (TEA) and 1-methyl-4-phenylpyridinium (MPP+), the platinum-based drug oxaliplatin or weak bases that are positively charged at physiological pH, cimetidine, the platinum-based drugs cisplatin and oxaliplatin or the antidiabetic drug metformin. Mediates the efflux of endogenous compounds such as, creatinine, thiamine and estrone-3-sulfate. Plays a physiological role in the excretion of drugs, toxins and endogenous metabolites through the kidney. In terms of biological role, non-functional protein. This chain is Multidrug and toxin extrusion protein 2, found in Homo sapiens (Human).